A 173-amino-acid polypeptide reads, in one-letter code: Crossover junction endodeoxyribonuclease RuvC (173 aa).

Residues Asp8, Glu68, and Asp140 contribute to the active site. Residues Asp8, Glu68, and Asp140 each coordinate Mg(2+).

It belongs to the RuvC family. Homodimer which binds Holliday junction (HJ) DNA. The HJ becomes 2-fold symmetrical on binding to RuvC with unstacked arms; it has a different conformation from HJ DNA in complex with RuvA. In the full resolvosome a probable DNA-RuvA(4)-RuvB(12)-RuvC(2) complex forms which resolves the HJ. Mg(2+) serves as cofactor.

The protein localises to the cytoplasm. It catalyses the reaction Endonucleolytic cleavage at a junction such as a reciprocal single-stranded crossover between two homologous DNA duplexes (Holliday junction).. The RuvA-RuvB-RuvC complex processes Holliday junction (HJ) DNA during genetic recombination and DNA repair. Endonuclease that resolves HJ intermediates. Cleaves cruciform DNA by making single-stranded nicks across the HJ at symmetrical positions within the homologous arms, yielding a 5'-phosphate and a 3'-hydroxyl group; requires a central core of homology in the junction. The consensus cleavage sequence is 5'-(A/T)TT(C/G)-3'. Cleavage occurs on the 3'-side of the TT dinucleotide at the point of strand exchange. HJ branch migration catalyzed by RuvA-RuvB allows RuvC to scan DNA until it finds its consensus sequence, where it cleaves and resolves the cruciform DNA. This is Crossover junction endodeoxyribonuclease RuvC from Saccharophagus degradans (strain 2-40 / ATCC 43961 / DSM 17024).